The primary structure comprises 110 residues: Small heat shock protein hspG11 (110 aa).

The region spanning 30 to 110 (KTIIDILPPM…KSTSTSSTFR (81 aa)) is the sHSP domain. Positions 78 to 110 (KDLNKQHNNNNNNNNNNNNLVIEKSTSTSSTFR) are disordered. Positions 85 to 96 (NNNNNNNNNNNN) are enriched in low complexity. The segment covering 101 to 110 (KSTSTSSTFR) has biased composition (polar residues).

Belongs to the small heat shock protein (HSP20) family.

This chain is Small heat shock protein hspG11 (hspG11), found in Dictyostelium discoideum (Social amoeba).